Reading from the N-terminus, the 498-residue chain is Polyamine aminopropyltransferase (498 aa).

Helical transmembrane passes span 7-27, 35-55, 67-87, 97-117, 134-154, and 163-183; these read ISVLIISSCGLVYELLAGTIA, VTQFSLIIGTYLFSMGVGSWL, FLEIELAIGLVGGFSSAILYL, IPLFLLVILIGILVGLEIPVL, VLSLDYVGALLASILFPIFFA, and GFIFGILNVGVALWGTWVLPL. Residues 196-446 form a spermidine synthase region; it reads VVVLTLLILG…AGQRPIQFKK (251 aa). The PABS domain occupies 200–439; it reads TLLILGFSYS…GEWGFVLAGQ (240 aa). S-methyl-5'-thioadenosine is bound at residue glutamine 234. 2 residues coordinate spermidine: histidine 264 and aspartate 288. S-methyl-5'-thioadenosine contacts are provided by residues aspartate 308 and 342-343; that span reads DA. The active-site Proton acceptor is aspartate 360.

Belongs to the spermidine/spermine synthase family. Homodimer or homotetramer.

It localises to the cell membrane. It carries out the reaction S-adenosyl 3-(methylsulfanyl)propylamine + putrescine = S-methyl-5'-thioadenosine + spermidine + H(+). The protein operates within amine and polyamine biosynthesis; spermidine biosynthesis; spermidine from putrescine: step 1/1. Catalyzes the irreversible transfer of a propylamine group from the amino donor S-adenosylmethioninamine (decarboxy-AdoMet) to putrescine (1,4-diaminobutane) to yield spermidine. This chain is Polyamine aminopropyltransferase, found in Leptospira interrogans serogroup Icterohaemorrhagiae serovar copenhageni (strain Fiocruz L1-130).